A 279-amino-acid polypeptide reads, in one-letter code: MRVNGRNLTNLRFADDIVLIANHPNTASKMLQELVQKCSEVGLEINTGKTKVLRNRLADPSKVYFGSPSSTTQLDDVDEYIYLGRQINAHNNLMPEIHRRRRAAWAAFNGSKNTTDSITDKKIRVNLFDSIVLPALTYGSEAWTFNKALSERVRITHASLERRLVGITLTQQRERDLHREDIRVMSQVRDPLNFVKKRKLGWAGHVARRKDGRWTTLMTEWRPWNWKRYVGRTPMRWTDSLRKEITTRDADGEVITPWSTIAKDRKEWLAVIRRNTTNS.

The Reverse transcriptase domain occupies 1–87; it reads MRVNGRNLTN…DEYIYLGRQI (87 aa).

This is an uncharacterized protein from Caenorhabditis elegans.